We begin with the raw amino-acid sequence, 428 residues long: Ribosomal RNA small subunit methyltransferase B (428 aa).

Residues 253-259, Asp-276, Asp-302, and Asp-321 contribute to the S-adenosyl-L-methionine site; that span reads CAAPGGK. Cys-374 (nucleophile) is an active-site residue.

This sequence belongs to the class I-like SAM-binding methyltransferase superfamily. RsmB/NOP family.

The protein resides in the cytoplasm. The enzyme catalyses cytidine(967) in 16S rRNA + S-adenosyl-L-methionine = 5-methylcytidine(967) in 16S rRNA + S-adenosyl-L-homocysteine + H(+). Specifically methylates the cytosine at position 967 (m5C967) of 16S rRNA. The polypeptide is Ribosomal RNA small subunit methyltransferase B (Citrobacter koseri (strain ATCC BAA-895 / CDC 4225-83 / SGSC4696)).